Consider the following 290-residue polypeptide: Shikimate dehydrogenase (NADP(+)) (290 aa).

Shikimate is bound by residues serine 24–serine 26 and threonine 71. Lysine 75 (proton acceptor) is an active-site residue. Shikimate contacts are provided by asparagine 96 and aspartate 111. Residues glycine 135 to alanine 139, asparagine 159 to arginine 164, and isoleucine 228 contribute to the NADP(+) site. Tyrosine 230 contacts shikimate. NADP(+) is bound at residue glycine 251.

The protein belongs to the shikimate dehydrogenase family. As to quaternary structure, homodimer.

It catalyses the reaction shikimate + NADP(+) = 3-dehydroshikimate + NADPH + H(+). Its pathway is metabolic intermediate biosynthesis; chorismate biosynthesis; chorismate from D-erythrose 4-phosphate and phosphoenolpyruvate: step 4/7. Involved in the biosynthesis of the chorismate, which leads to the biosynthesis of aromatic amino acids. Catalyzes the reversible NADPH linked reduction of 3-dehydroshikimate (DHSA) to yield shikimate (SA). The protein is Shikimate dehydrogenase (NADP(+)) of Bartonella tribocorum (strain CIP 105476 / IBS 506).